Here is a 69-residue protein sequence, read N- to C-terminus: Lantibiotic lichenicidin A2 (69 aa).

A propeptide spanning residues 1 to 37 is cleaved from the precursor; the sequence is MKNSAAREAFKGANHPAGMVSEEELKALVGGNDVNPE. Thr-38 bears the 2-oxobutanoic acid mark. 3 positions are modified to (Z)-2,3-didehydrobutyrine: Thr-39, Thr-42, and Thr-43. The segment at residues 44–48 is a cross-link (lanthionine (Ser-Cys)); the sequence is SSWTC. The residue at position 45 (Ser-45) is a 2,3-didehydroalanine (Ser). (Z)-2,3-didehydrobutyrine occurs at positions 50 and 54. The lanthionine (Ser-Cys) cross-link spans 56-60; the sequence is SASLC. 2 cross-links (beta-methyllanthionine (Thr-Cys)) span residues 62 to 65 and 66 to 69; these read TTKC and TSRC. A (Z)-2,3-didehydrobutyrine modification is found at Thr-63.

In terms of processing, maturation of lantibiotics involves the enzymatic conversion of Thr, and Ser into dehydrated AA and the formation of thioether bonds with cysteine. This is followed by membrane translocation and cleavage of the modified precursor.

It localises to the secreted. The protein resides in the cell wall. Its function is as follows. Lanthionine-containing peptide antibiotic (lantibiotic) active on Gram-positive bacteria. The bactericidal activity of lantibiotics is based on depolarization of energized bacterial cytoplasmic membranes, initiated by the formation of aqueous transmembrane pores. When present individually, LchA2 exhibits activity towards L.lactis HP. When combined with LchA1, it displays activity towards a broad spectrum of non-pathogenic and pathogenic Gram-positive bacteria including strains of L.monocytogenes, methicillin-resistant S.aureus, S.pneumoniae and strains of vancomycin-resistant enterococci, but not towards E.faecium L4001 and BM4147-1. Combined LchA1 and LchA2 peptides also inhibit Bacillus sp. HIL-Y85/54728, L.lactis DPC3417 and B.halodurans C-125, which produce lantibiotics themselves. Inactivated by proteinase K and pronase E, but not by trypsin and chymotrypsin. This chain is Lantibiotic lichenicidin A2, found in Bacillus licheniformis (strain ATCC 14580 / DSM 13 / JCM 2505 / CCUG 7422 / NBRC 12200 / NCIMB 9375 / NCTC 10341 / NRRL NRS-1264 / Gibson 46).